Consider the following 357-residue polypeptide: Ubiquitin carboxyl-terminal hydrolase 2 (357 aa).

The USP domain maps to 19–351; sequence TGLRNLGNTC…DAYLLFYELA (333 aa). Catalysis depends on cysteine 28, which acts as the Nucleophile. Positions 177, 180, 228, and 231 each coordinate Zn(2+). Histidine 309 functions as the Proton acceptor in the catalytic mechanism.

This sequence belongs to the peptidase C19 family. USP2 subfamily. In terms of assembly, homooligomer.

The protein resides in the cytoplasm. It localises to the perinuclear region. The catalysed reaction is Thiol-dependent hydrolysis of ester, thioester, amide, peptide and isopeptide bonds formed by the C-terminal Gly of ubiquitin (a 76-residue protein attached to proteins as an intracellular targeting signal).. Hydrolase that deubiquitinates polyubiquitinated target proteins such as MDM2, MDM4 and CCND1. Possesses both ubiquitin-specific peptidase and isopeptidase activities. May play a role in the regulation of the circadian clock. The chain is Ubiquitin carboxyl-terminal hydrolase 2 (USP2) from Gallus gallus (Chicken).